We begin with the raw amino-acid sequence, 422 residues long: Serine protease HTRA2, mitochondrial (422 aa).

Residues 1–17 constitute a mitochondrion transit peptide; that stretch reads MALRGSHRLEVIFKRCI. The propeptide occupies 18-74; that stretch reads ASPVFHSHAANRRSSQLAIKGTDPSSNGNSGQDQQNGEQKAKGWRRLVRFFVPFSLG. A compositionally biased stretch (polar residues) spans 29–55; the sequence is RRSSQLAIKGTDPSSNGNSGQDQQNGE. Positions 29-56 are disordered; sequence RRSSQLAIKGTDPSSNGNSGQDQQNGEQ. Residues 64 to 82 traverse the membrane as a helical segment; the sequence is LVRFFVPFSLGAAVSAAVI. 2 short sequence motifs (IAP-binding) span residues 75 to 78 and 94 to 97; these read AAVS and SKMT. The interval 139 to 302 is serine protease; sequence SNGSGFIIEQ…IPIDYVKVFL (164 aa). Catalysis depends on charge relay system residues His157, Asp189, and Ser266. Residues 325–410 form the PDZ domain; sequence MGITMLTLTP…NLDIVILRGV (86 aa).

Belongs to the peptidase S1C family. Interacts with th/DIAP1 (via BIR 2 domain).

The protein localises to the mitochondrion intermembrane space. It localises to the mitochondrion membrane. The enzyme catalyses Cleavage of non-polar aliphatic amino-acids at the P1 position, with a preference for Val, Ile and Met. At the P2 and P3 positions, Arg is selected most strongly with a secondary preference for other hydrophilic residues.. Functionally, serine protease that shows proteolytic activity against a non-specific substrate beta-casein. Promotes or induces cell death either by direct binding to and inhibition of BIRC proteins (also called inhibitor of apoptosis proteins, IAPs), leading to an increase in caspase activity, or by a BIRC inhibition-independent, caspase-independent and serine protease activity-dependent mechanism. Can antagonize antiapoptotic activity of th/Diap1 by directly inducing the degradation of th/Diap1. In Drosophila yakuba (Fruit fly), this protein is Serine protease HTRA2, mitochondrial.